The sequence spans 397 residues: Succinate--CoA ligase [ADP-forming] subunit beta (397 aa).

The ATP-grasp domain maps to 9–254 (KALLKGYGAP…ETEEDAKEIE (246 aa)). ATP is bound by residues Lys-46, 53–55 (GRG), Glu-109, Ala-112, and Glu-117. Mg(2+) is bound by residues Asn-209 and Asp-223. Residues Asn-274 and 331–333 (GIM) each bind substrate.

It belongs to the succinate/malate CoA ligase beta subunit family. Heterotetramer of two alpha and two beta subunits. Mg(2+) serves as cofactor.

It carries out the reaction succinate + ATP + CoA = succinyl-CoA + ADP + phosphate. The catalysed reaction is GTP + succinate + CoA = succinyl-CoA + GDP + phosphate. The protein operates within carbohydrate metabolism; tricarboxylic acid cycle; succinate from succinyl-CoA (ligase route): step 1/1. In terms of biological role, succinyl-CoA synthetase functions in the citric acid cycle (TCA), coupling the hydrolysis of succinyl-CoA to the synthesis of either ATP or GTP and thus represents the only step of substrate-level phosphorylation in the TCA. The beta subunit provides nucleotide specificity of the enzyme and binds the substrate succinate, while the binding sites for coenzyme A and phosphate are found in the alpha subunit. In Rhizobium etli (strain CIAT 652), this protein is Succinate--CoA ligase [ADP-forming] subunit beta.